The following is an 840-amino-acid chain: E3 ubiquitin-protein ligase SH3RF1 (840 aa).

The segment at C12–R53 adopts an RING-type zinc-finger fold. The tract at residues V105–P129 is disordered. SH3 domains are found at residues P134–P193 and Q196–A259. Disordered regions lie at residues D267–M324, T394–S442, G516–G545, Q578–G633, A652–E723, and M744–P773. Residues G273–A282 are compositionally biased toward low complexity. Positions T283–Q292 are enriched in polar residues. The segment at Q292–T362 is interaction with RAC1. S304 carries the phosphoserine modification. 2 stretches are compositionally biased toward low complexity: residues S307–Q320 and Q405–P424. The interval H434–P537 is interaction with AKT2. One can recognise an SH3 3 domain in the interval P439–R500. The span at S616–P625 shows a compositional bias: pro residues. Residues R681–G692 show a composition bias toward basic and acidic residues. Position 709 is a phosphoserine (S709). The region spanning A781–I840 is the SH3 4 domain.

The protein belongs to the SH3RF family. In terms of assembly, interacts with RAC1; in a GTP-dependent manner. Interacts with MAP3K10/MLK2 and MAP3K11/MLK3. Interacts with MAPK8IP; this interaction leads to the PJAC complex (POSH-JIP or SH3RF1/MAPK8IP apoptotic complex) with a 1:1 ratio. Interacts with SIAH1. Interacts with HERP1. Probably part of a signaling complex that may contain SH3RF1, MAPK8IP, DLK1, MAP2K4/MKK4, MAP2K7/MKK7, MAPK8/JNK1, MAPK9/JNK2, AKT1 and AKT2. Found in a complex with RAC2, MAP3K7/TAK1, MAP2K7/MKK7, MAPK8IP1/JIP1, MAPK8/JNK1 and MAPK9/JNK2. Found in a complex with RAC1, MAP3K11/MLK3, MAP2K7/MKK7, MAPK8IP1/JIP1 and MAPK8/JNK1. Interacts with SH3RF2. In terms of processing, phosphorylated at Ser-304 by AKT1 and AKT2. When phosphorylated, it has reduced ability to bind Rac. Post-translationally, autoubiquitinated. Ubiquitinated by SH3RF2, leading to proteasome-mediated degradation.

Its subcellular location is the cytoplasm. It localises to the perinuclear region. The protein resides in the cell projection. It is found in the lamellipodium. The protein localises to the golgi apparatus. Its subcellular location is the trans-Golgi network. The catalysed reaction is S-ubiquitinyl-[E2 ubiquitin-conjugating enzyme]-L-cysteine + [acceptor protein]-L-lysine = [E2 ubiquitin-conjugating enzyme]-L-cysteine + N(6)-ubiquitinyl-[acceptor protein]-L-lysine.. Its pathway is protein modification; protein ubiquitination. In terms of biological role, has E3 ubiquitin-protein ligase activity. In the absence of an external substrate, it can catalyze self-ubiquitination. Stimulates ubiquitination of potassium channel KCNJ1, enhancing it's dynamin-dependent and clathrin-independent endocytosis. Acts as a scaffold protein that coordinates with MAPK8IP1/JIP1 in organizing different components of the JNK pathway, including RAC1 or RAC2, MAP3K11/MLK3 or MAP3K7/TAK1, MAP2K7/MKK7, MAPK8/JNK1 and/or MAPK9/JNK2 into a functional multiprotein complex to ensure the effective activation of the JNK signaling pathway. Regulates the differentiation of CD4(+) and CD8(+) T-cells and promotes T-helper 1 (Th1) cell differentiation. Regulates the activation of MAPK8/JNK1 and MAPK9/JNK2 in CD4(+) T-cells and the activation of MAPK8/JNK1 in CD8(+) T-cells. Plays a crucial role in the migration of neocortical neurons in the developing brain. Controls proper cortical neuronal migration and the formation of proximal cytoplasmic dilation in the leading process (PCDLP) in migratory neocortical neurons by regulating the proper localization of activated RAC1 and F-actin assembly. This chain is E3 ubiquitin-protein ligase SH3RF1 (SH3RF1), found in Bos taurus (Bovine).